Reading from the N-terminus, the 354-residue chain is Gibberellin receptor GID1 (354 aa).

The Involved in the stabilization of the negatively charged intermediate by the formation of the oxyanion hole signature appears at 120–122 (HGG). Gibberellin A3-binding positions include 122–123 (GS), Tyr134, Ser198, and Asp250. Gibberellin A4 contacts are provided by residues 122-123 (GS), Tyr134, and Ser198. Residue Ser198 is part of the active site. Asp296 is a catalytic residue. Gly327 contacts gibberellin A3. A gibberellin A4-binding site is contributed by Gly327.

It belongs to the 'GDXG' lipolytic enzyme family. In terms of assembly, interacts with the DELLA protein SLR1 in a GA-dependent manner, resulting in subsequent SLR1 degradation.

It is found in the nucleus. In terms of biological role, functions as a soluble gibberellin (GA) receptor. GA is an essential hormone that regulates growth and development in plants. Binds with high affinity the biologically active GAs such as GA1, GA3 and GA4, but has low or no affinity for the biologically inactive GAs. Upon GA-binding, it interacts with the DELLA protein SLR1, a repressor of GA signaling. This leads to SLR1 degradation by the proteasome, allowing the GA signaling pathway. This Oryza sativa subsp. japonica (Rice) protein is Gibberellin receptor GID1.